The chain runs to 287 residues: IQ domain-containing protein K (287 aa).

This Homo sapiens (Human) protein is IQ domain-containing protein K (IQCK).